Here is a 67-residue protein sequence, read N- to C-terminus: Beta-defensin 123 (67 aa).

Residues 1-20 (MKLLLLTLTVLLLLSQLTPG) form the signal peptide. Disulfide bonds link C25–C52, C32–C46, and C36–C53.

It belongs to the beta-defensin family. In terms of tissue distribution, abundant expression in the male reproductive tract only. Expressed abundantly in testis, while expression in epididymis decreased gradually from caput to cauda.

Its subcellular location is the secreted. Functionally, has antibacterial activity. The chain is Beta-defensin 123 (DEFB123) from Macaca mulatta (Rhesus macaque).